The chain runs to 223 residues: Putative germin-like protein 2-2 (223 aa).

A signal peptide spans 1–28; the sequence is MAAVGACFLQQLAVVALLALWCSHGAIA. Cys-38 and Cys-53 are disulfide-bonded. The 151-residue stretch at 67–217 folds into the Cupin type-1 domain; the sequence is SGLHMAGNTT…AFQVDKNIID (151 aa). N-linked (GlcNAc...) asparagine glycosylation is found at Asn-74 and Asn-82. Residues His-115, His-117, Glu-122, and His-163 each coordinate Mn(2+). Residue Asn-168 is glycosylated (N-linked (GlcNAc...) asparagine).

It belongs to the germin family. In terms of assembly, oligomer (believed to be a pentamer but probably hexamer).

It localises to the secreted. It is found in the extracellular space. Its subcellular location is the apoplast. May play a role in plant defense. Probably has no oxalate oxidase activity even if the active site is conserved. This Oryza sativa subsp. japonica (Rice) protein is Putative germin-like protein 2-2.